A 306-amino-acid chain; its full sequence is Protein YIPF1 (306 aa).

Residues 1 to 119 are Cytoplasmic-facing; sequence MAAVDDLQFE…VRLYIRSNPD (119 aa). The tract at residues 30–63 is disordered; it reads IEDPSVSFGHQPRPPGSVGREEDEELLGNNDSDE. Acidic residues predominate over residues 50-63; that stretch reads EEDEELLGNNDSDE. Residues 120-140 traverse the membrane as a helical segment; the sequence is LYGPFWICATLVFAIAISGNL. Topologically, residues 141–162 are lumenal; the sequence is SNFLIHLGEKTYHYVPEFQKVS. The chain crosses the membrane as a helical span at residues 163 to 183; the sequence is IAATVIYAYAWLVPLALWGFL. Residues 184–200 are Cytoplasmic-facing; that stretch reads LWRNSKVMSMVSYSFLE. Residues 201 to 221 form a helical membrane-spanning segment; the sequence is IVCVYGYSLFIYIPTAVLWII. Over 222-227 the chain is Lumenal; it reads PQRVVR. The chain crosses the membrane as a helical span at residues 228 to 248; that stretch reads WVLVMIALGVSGSVLVMTFWP. At 249 to 256 the chain is on the cytoplasmic side; that stretch reads AVREDNRR. Residues 257-277 traverse the membrane as a helical segment; it reads VALATIVTIVLLHVLLSVGCL. Topologically, residues 278–306 are lumenal; the sequence is AYFFDAPEMDHLPAAITTPNQTVTAAKSS. N-linked (GlcNAc...) asparagine glycosylation occurs at Asn-297.

It belongs to the YIP1 family. In terms of assembly, interacts with YIPF6; this interaction may stabilize YIPF1. May also form a ternary complex with YIPF2 and YIPF6.

The protein resides in the golgi apparatus. It is found in the cis-Golgi network membrane. It localises to the trans-Golgi network membrane. Its subcellular location is the late endosome membrane. The protein is Protein YIPF1 (Yipf1) of Mus musculus (Mouse).